A 167-amino-acid chain; its full sequence is 2-C-methyl-D-erythritol 2,4-cyclodiphosphate synthase (167 aa).

D15 and H17 together coordinate a divalent metal cation. Residues D15–H17 and H43–S44 each bind 4-CDP-2-C-methyl-D-erythritol 2-phosphate. Residue H51 coordinates a divalent metal cation. 4-CDP-2-C-methyl-D-erythritol 2-phosphate contacts are provided by residues D65–G67, T141–E144, and R151.

This sequence belongs to the IspF family. Homotrimer. It depends on a divalent metal cation as a cofactor.

The catalysed reaction is 4-CDP-2-C-methyl-D-erythritol 2-phosphate = 2-C-methyl-D-erythritol 2,4-cyclic diphosphate + CMP. It participates in isoprenoid biosynthesis; isopentenyl diphosphate biosynthesis via DXP pathway; isopentenyl diphosphate from 1-deoxy-D-xylulose 5-phosphate: step 4/6. Involved in the biosynthesis of isopentenyl diphosphate (IPP) and dimethylallyl diphosphate (DMAPP), two major building blocks of isoprenoid compounds. Catalyzes the conversion of 4-diphosphocytidyl-2-C-methyl-D-erythritol 2-phosphate (CDP-ME2P) to 2-C-methyl-D-erythritol 2,4-cyclodiphosphate (ME-CPP) with a corresponding release of cytidine 5-monophosphate (CMP). The sequence is that of 2-C-methyl-D-erythritol 2,4-cyclodiphosphate synthase from Prochlorococcus marinus (strain MIT 9312).